Consider the following 144-residue polypeptide: NADPH-dependent 7-cyano-7-deazaguanine reductase (144 aa).

Over residues 1 to 21 the composition is skewed to polar residues; that stretch reads MSQSPIQNPTSDPNAQSVQET. The tract at residues 1–27 is disordered; the sequence is MSQSPIQNPTSDPNAQSVQETSESKYG. Cys61 acts as the Thioimide intermediate in catalysis. Asp68 (proton donor) is an active-site residue. Substrate is bound by residues 83-85 and 102-103; these read VEL and HE.

This sequence belongs to the GTP cyclohydrolase I family. QueF type 1 subfamily.

The protein resides in the cytoplasm. The enzyme catalyses 7-aminomethyl-7-carbaguanine + 2 NADP(+) = 7-cyano-7-deazaguanine + 2 NADPH + 3 H(+). The protein operates within tRNA modification; tRNA-queuosine biosynthesis. In terms of biological role, catalyzes the NADPH-dependent reduction of 7-cyano-7-deazaguanine (preQ0) to 7-aminomethyl-7-deazaguanine (preQ1). In Acaryochloris marina (strain MBIC 11017), this protein is NADPH-dependent 7-cyano-7-deazaguanine reductase.